Consider the following 475-residue polypeptide: Aspartyl/glutamyl-tRNA(Asn/Gln) amidotransferase subunit B (475 aa).

Belongs to the GatB/GatE family. GatB subfamily. As to quaternary structure, heterotrimer of A, B and C subunits.

It carries out the reaction L-glutamyl-tRNA(Gln) + L-glutamine + ATP + H2O = L-glutaminyl-tRNA(Gln) + L-glutamate + ADP + phosphate + H(+). The catalysed reaction is L-aspartyl-tRNA(Asn) + L-glutamine + ATP + H2O = L-asparaginyl-tRNA(Asn) + L-glutamate + ADP + phosphate + 2 H(+). In terms of biological role, allows the formation of correctly charged Asn-tRNA(Asn) or Gln-tRNA(Gln) through the transamidation of misacylated Asp-tRNA(Asn) or Glu-tRNA(Gln) in organisms which lack either or both of asparaginyl-tRNA or glutaminyl-tRNA synthetases. The reaction takes place in the presence of glutamine and ATP through an activated phospho-Asp-tRNA(Asn) or phospho-Glu-tRNA(Gln). In Chlorobaculum tepidum (strain ATCC 49652 / DSM 12025 / NBRC 103806 / TLS) (Chlorobium tepidum), this protein is Aspartyl/glutamyl-tRNA(Asn/Gln) amidotransferase subunit B.